Here is a 154-residue protein sequence, read N- to C-terminus: Large ribosomal subunit protein uL15 (154 aa).

A disordered region spans residues 1-57; that stretch reads MRFQDLHPQAGSRRRKRRIGRGIAAGQGASGGFGMRGQKSRSGRPTRPGFEGGQNPL. The segment covering 23–35 has biased composition (gly residues); that stretch reads IAAGQGASGGFGM.

This sequence belongs to the universal ribosomal protein uL15 family. As to quaternary structure, part of the 50S ribosomal subunit.

Its function is as follows. Binds to the 23S rRNA. The polypeptide is Large ribosomal subunit protein uL15 (Thermosynechococcus vestitus (strain NIES-2133 / IAM M-273 / BP-1)).